Reading from the N-terminus, the 323-residue chain is Sodium/potassium-transporting ATPase subunit beta-2 (323 aa).

Residues 1-50 (MPTITEDCIDGFQQYYSRPPERPKKKSLKQMVYDSEDNSYFGRSMDSWAK) are Cytoplasmic-facing. The helical; Signal-anchor for type II membrane protein transmembrane segment at 51-71 (IGIFYVAFYGVLAALVAICMW) threads the bilayer. At 72–323 (AFFQTLDPRI…GSVHYELLID (252 aa)) the chain is on the extracellular side. 2 cysteine pairs are disulfide-bonded: cysteine 153/cysteine 165 and cysteine 175/cysteine 189. Residues asparagine 180 and asparagine 206 are each glycosylated (N-linked (GlcNAc...) asparagine). Cysteine 241 and cysteine 298 are disulfide-bonded.

The protein belongs to the X(+)/potassium ATPases subunit beta family. The sodium/potassium-transporting ATPase is composed of a catalytic alpha subunit, an auxiliary non-catalytic beta subunit and an additional regulatory subunit. In embryos, it is expressed in the neurons of the CNS and PNS, in Garland cells and posterior spiracles. In adults, it shows a nervous system specific distribution: optic lobes, brain, thoracic ganglia and axonal pathways in the leg. Both isoforms concentrate in the adult head, isoform 2.2 being predominant. Both isoforms are weakly expressed in the thorax and very poorly expressed in the abdomen.

The protein localises to the cell membrane. This is the non-catalytic component of the active enzyme, which catalyzes the hydrolysis of ATP coupled with the exchange of Na(+) and K(+) ions across the plasma membrane. The beta subunit regulates, through assembly of alpha/beta heterodimers, the number of sodium pumps transported to the plasma membrane. This Drosophila melanogaster (Fruit fly) protein is Sodium/potassium-transporting ATPase subunit beta-2 (nrv2).